The following is a 254-amino-acid chain: Pectate lyase E (254 aa).

Positions M1–A17 are cleaved as a signal peptide. The disordered stretch occupies residues T227–C254. A glycan (N-linked (GlcNAc...) asparagine) is linked at N229. Positions S239 to C254 are enriched in low complexity.

Belongs to the polysaccharide lyase 3 family. Ca(2+) is required as a cofactor.

The protein localises to the secreted. It catalyses the reaction Eliminative cleavage of (1-&gt;4)-alpha-D-galacturonan to give oligosaccharides with 4-deoxy-alpha-D-galact-4-enuronosyl groups at their non-reducing ends.. Its function is as follows. Pectinolytic enzyme consist of four classes of enzymes: pectin lyase, polygalacturonase, pectin methylesterase and rhamnogalacturonase. Among pectinolytic enzymes, pectin lyase is the most important in depolymerization of pectin, since it cleaves internal glycosidic bonds of highly methylated pectins. Favors pectate, the anion, over pectin, the methyl ester. The polypeptide is Pectate lyase E (plyE) (Emericella nidulans (strain FGSC A4 / ATCC 38163 / CBS 112.46 / NRRL 194 / M139) (Aspergillus nidulans)).